Here is a 299-residue protein sequence, read N- to C-terminus: Taste receptor type 2 member 1 (299 aa).

Over 1 to 9 the chain is Extracellular; sequence MLESHLIIY. The chain crosses the membrane as a helical span at residues 10 to 30; the sequence is FLLAVIQFLLGIFTNGIIVVV. The Cytoplasmic segment spans residues 31–55; that stretch reads NGIDLIKHRKMAPLDLLLSCLAVSR. A helical transmembrane segment spans residues 56–76; it reads IFLQLFIFYVNVIVIFFIEFI. Residues 77 to 81 are Extracellular-facing; sequence MCSAN. A helical membrane pass occupies residues 82 to 102; it reads CAILLFINELELWLATWLGVF. Topologically, residues 103–124 are cytoplasmic; the sequence is YCAKVASVRHPLFXWLKMRISK. A helical membrane pass occupies residues 125-145; the sequence is LVPWMILGSLLYVSMICVFHS. Residues 146-178 lie on the Extracellular side of the membrane; it reads KYAGFMVPYFLRNFFSQNTTIQKEDTLAIQIFS. Asn-163 carries N-linked (GlcNAc...) asparagine glycosylation. A helical membrane pass occupies residues 179–199; that stretch reads FVAEFSVPLLIFLVAVLLLIF. Topologically, residues 200–222 are cytoplasmic; that stretch reads SLGRHTRQMRNTVAGSRVPGRGA. The helical transmembrane segment at 223–243 threads the bilayer; the sequence is PISALLSILSFLILYFSHCMI. Residues 244 to 257 are Extracellular-facing; sequence KVFLSSLKFHIRRF. The helical transmembrane segment at 258-278 threads the bilayer; sequence IFLFFILVIGIYPSGHSLILI. Over 279–299 the chain is Cytoplasmic; the sequence is LGNPKLKQNAKKFLLHSKCCQ.

It belongs to the G-protein coupled receptor T2R family.

The protein resides in the membrane. Functionally, receptor that may play a role in the perception of bitterness and is gustducin-linked. May play a role in sensing the chemical composition of the gastrointestinal content. The activity of this receptor may stimulate alpha gustducin, mediate PLC-beta-2 activation and lead to the gating of TRPM5. The polypeptide is Taste receptor type 2 member 1 (TAS2R1) (Gorilla gorilla gorilla (Western lowland gorilla)).